The primary structure comprises 254 residues: Cytochrome c oxidase subunit 2 (254 aa).

The Mitochondrial intermembrane segment spans residues 1–37; the sequence is MNNILNFYPAVITTDVAENWQIGFQDPATPIMEGIIN. Residues 38 to 58 form a helical membrane-spanning segment; the sequence is LHYDLMFFICVISVFVSWMLG. The Mitochondrial matrix portion of the chain corresponds to 59-83; that stretch reads RTLWHFEQNQNKIPSSLTHGTLIEM. A helical transmembrane segment spans residues 84 to 104; that stretch reads IWTVTPAFILLIIAVPSFSLL. Residues 105–254 are Mitochondrial intermembrane-facing; that stretch reads YAMDEIISPA…VSWISNKLNE (150 aa). Cu cation contacts are provided by His-186, Cys-221, Glu-223, Cys-225, His-229, and Met-232. Glu-223 provides a ligand contact to Mg(2+).

This sequence belongs to the cytochrome c oxidase subunit 2 family. As to quaternary structure, component of the cytochrome c oxidase (complex IV, CIV), a multisubunit enzyme composed of a catalytic core of 3 subunits and several supernumerary subunits. The complex exists as a monomer or a dimer and forms supercomplexes (SCs) in the inner mitochondrial membrane with ubiquinol-cytochrome c oxidoreductase (cytochrome b-c1 complex, complex III, CIII). The cofactor is Cu cation.

It localises to the mitochondrion inner membrane. The enzyme catalyses 4 Fe(II)-[cytochrome c] + O2 + 8 H(+)(in) = 4 Fe(III)-[cytochrome c] + 2 H2O + 4 H(+)(out). In terms of biological role, component of the cytochrome c oxidase, the last enzyme in the mitochondrial electron transport chain which drives oxidative phosphorylation. The respiratory chain contains 3 multisubunit complexes succinate dehydrogenase (complex II, CII), ubiquinol-cytochrome c oxidoreductase (cytochrome b-c1 complex, complex III, CIII) and cytochrome c oxidase (complex IV, CIV), that cooperate to transfer electrons derived from NADH and succinate to molecular oxygen, creating an electrochemical gradient over the inner membrane that drives transmembrane transport and the ATP synthase. Cytochrome c oxidase is the component of the respiratory chain that catalyzes the reduction of oxygen to water. Electrons originating from reduced cytochrome c in the intermembrane space (IMS) are transferred via the dinuclear copper A center (CU(A)) of subunit 2 and heme A of subunit 1 to the active site in subunit 1, a binuclear center (BNC) formed by heme A3 and copper B (CU(B)). The BNC reduces molecular oxygen to 2 water molecules using 4 electrons from cytochrome c in the IMS and 4 protons from the mitochondrial matrix. The protein is Cytochrome c oxidase subunit 2 (COX2) of Chondrus crispus (Carrageen Irish moss).